Consider the following 647-residue polypeptide: Threonine--tRNA ligase (647 aa).

A TGS domain is found at 1–61; the sequence is MINITFPDGA…TEDGSIEIVT (61 aa). Residues 242–540 are catalytic; sequence DHRKLGKELD…LIENYKGAFP (299 aa). Zn(2+) is bound by residues C336, H387, and H517.

Belongs to the class-II aminoacyl-tRNA synthetase family. Homodimer. Zn(2+) serves as cofactor.

The protein resides in the cytoplasm. It carries out the reaction tRNA(Thr) + L-threonine + ATP = L-threonyl-tRNA(Thr) + AMP + diphosphate + H(+). Functionally, catalyzes the attachment of threonine to tRNA(Thr) in a two-step reaction: L-threonine is first activated by ATP to form Thr-AMP and then transferred to the acceptor end of tRNA(Thr). Also edits incorrectly charged L-seryl-tRNA(Thr). In Streptococcus pneumoniae (strain JJA), this protein is Threonine--tRNA ligase.